The primary structure comprises 160 residues: Cytochrome b6-f complex subunit 4 (160 aa).

The next 3 helical transmembrane spans lie at 36 to 56, 95 to 115, and 131 to 151; these read ILFTFPICIAGTIGLITGLAI, LLGIACQGAIPLGLMMVPFIE, and AVFLFGTAVTLWLGAGACFPI.

The protein belongs to the cytochrome b family. PetD subfamily. As to quaternary structure, the 4 large subunits of the cytochrome b6-f complex are cytochrome b6, subunit IV (17 kDa polypeptide, PetD), cytochrome f and the Rieske protein, while the 4 small subunits are PetG, PetL, PetM and PetN. The complex functions as a dimer.

Its subcellular location is the cellular thylakoid membrane. Functionally, component of the cytochrome b6-f complex, which mediates electron transfer between photosystem II (PSII) and photosystem I (PSI), cyclic electron flow around PSI, and state transitions. The polypeptide is Cytochrome b6-f complex subunit 4 (Picosynechococcus sp. (strain ATCC 27264 / PCC 7002 / PR-6) (Agmenellum quadruplicatum)).